The chain runs to 122 residues: Small ribosomal subunit protein uS13 (122 aa).

Positions 93–122 (RRGLPVRGQRTKTNARTRKGPKKTIAGKKK) are disordered.

This sequence belongs to the universal ribosomal protein uS13 family. As to quaternary structure, part of the 30S ribosomal subunit. Forms a loose heterodimer with protein S19. Forms two bridges to the 50S subunit in the 70S ribosome.

Located at the top of the head of the 30S subunit, it contacts several helices of the 16S rRNA. In the 70S ribosome it contacts the 23S rRNA (bridge B1a) and protein L5 of the 50S subunit (bridge B1b), connecting the 2 subunits; these bridges are implicated in subunit movement. Contacts the tRNAs in the A and P-sites. In Corynebacterium kroppenstedtii (strain DSM 44385 / JCM 11950 / CIP 105744 / CCUG 35717), this protein is Small ribosomal subunit protein uS13.